A 196-amino-acid polypeptide reads, in one-letter code: GTP cyclohydrolase-2 (196 aa).

49 to 53 (RVHSE) is a GTP binding site. The Zn(2+) site is built by Cys-54, Cys-65, and Cys-67. Residues Gln-70, 92-94 (EGR), and Thr-114 contribute to the GTP site. Residue Asp-126 is the Proton acceptor of the active site. Arg-128 (nucleophile) is an active-site residue. Residues Thr-149 and Lys-154 each coordinate GTP.

It belongs to the GTP cyclohydrolase II family. As to quaternary structure, homodimer. The cofactor is Zn(2+).

It carries out the reaction GTP + 4 H2O = 2,5-diamino-6-hydroxy-4-(5-phosphoribosylamino)-pyrimidine + formate + 2 phosphate + 3 H(+). The protein operates within cofactor biosynthesis; riboflavin biosynthesis; 5-amino-6-(D-ribitylamino)uracil from GTP: step 1/4. Functionally, catalyzes the conversion of GTP to 2,5-diamino-6-ribosylamino-4(3H)-pyrimidinone 5'-phosphate (DARP), formate and pyrophosphate. This is GTP cyclohydrolase-2 from Shigella dysenteriae serotype 1 (strain Sd197).